Here is a 284-residue protein sequence, read N- to C-terminus: Undecaprenyl-diphosphatase (284 aa).

8 helical membrane-spanning segments follow: residues 7–27, 44–64, 90–110, 116–136, 167–187, 197–217, 229–249, and 259–279; these read IILG…TGHL, EMFD…LYFH, LWLK…PLND, FYHF…FIVI, VLSL…ALLV, FTFF…ILHF, FGVL…AIKF, and FTFF…YAMF.

Belongs to the UppP family.

The protein localises to the cell membrane. The catalysed reaction is di-trans,octa-cis-undecaprenyl diphosphate + H2O = di-trans,octa-cis-undecaprenyl phosphate + phosphate + H(+). Catalyzes the dephosphorylation of undecaprenyl diphosphate (UPP). Confers resistance to bacitracin. This chain is Undecaprenyl-diphosphatase, found in Lactococcus lactis subsp. lactis (strain IL1403) (Streptococcus lactis).